The sequence spans 60 residues: DNA gyrase inhibitor YacG (60 aa).

4 residues coordinate Zn(2+): cysteine 15, cysteine 18, cysteine 30, and cysteine 34.

The protein belongs to the DNA gyrase inhibitor YacG family. Interacts with GyrB. Requires Zn(2+) as cofactor.

Inhibits all the catalytic activities of DNA gyrase by preventing its interaction with DNA. Acts by binding directly to the C-terminal domain of GyrB, which probably disrupts DNA binding by the gyrase. The sequence is that of DNA gyrase inhibitor YacG from Nitrobacter hamburgensis (strain DSM 10229 / NCIMB 13809 / X14).